A 186-amino-acid polypeptide reads, in one-letter code: A-type ATP synthase subunit E (186 aa).

The protein belongs to the V-ATPase E subunit family. As to quaternary structure, has multiple subunits with at least A(3), B(3), C, D, E, F, H, I and proteolipid K(x).

Its subcellular location is the cell membrane. In terms of biological role, component of the A-type ATP synthase that produces ATP from ADP in the presence of a proton gradient across the membrane. The polypeptide is A-type ATP synthase subunit E (Methanocella arvoryzae (strain DSM 22066 / NBRC 105507 / MRE50)).